The chain runs to 196 residues: Chromophore lyase CpcT/CpeT (196 aa).

Belongs to the CpcT/CpeT biliprotein lyase family.

Covalently attaches a chromophore to Cys residue(s) of phycobiliproteins. The sequence is that of Chromophore lyase CpcT/CpeT from Synechococcus sp. (strain WH8020).